The following is a 90-amino-acid chain: Cell division protein CrgA (90 aa).

The tract at residues 1–26 (MPKAKVTKNSIAPVSSNPSANRTPVK) is disordered. Residues 7–26 (TKNSIAPVSSNPSANRTPVK) are compositionally biased toward polar residues. 2 consecutive transmembrane segments (helical) span residues 38-58 (VIMF…YLVG) and 69-89 (AWNY…TMGW).

Belongs to the CrgA family.

The protein resides in the cell membrane. In terms of biological role, involved in cell division. The chain is Cell division protein CrgA from Corynebacterium efficiens (strain DSM 44549 / YS-314 / AJ 12310 / JCM 11189 / NBRC 100395).